The primary structure comprises 943 residues: Receptor-like protein 35 (943 aa).

The N-terminal stretch at Met1–Ala31 is a signal peptide. Residues Ala32–Trp897 lie on the Extracellular side of the membrane. N-linked (GlcNAc...) asparagine glycans are attached at residues Asn67, Asn82, Asn118, Asn147, Asn171, Asn195, Asn219, and Asn222. LRR repeat units follow at residues Leu124 to Leu148, His150 to Asn171, Leu172 to Leu196, His198 to Leu220, Asn222 to Leu244, Ala245 to Asn267, Leu268 to Leu292, Thr293 to Ser317, Leu319 to Ile340, Pro341 to Ser364, and Ser366 to Phe389. N-linked (GlcNAc...) asparagine glycans are attached at residues Asn291 and Asn312. N-linked (GlcNAc...) asparagine glycosylation is found at Asn354 and Asn361. An LRR 12; degenerate repeat occupies Val390–His414. Residue Asn391 is glycosylated (N-linked (GlcNAc...) asparagine). 16 LRR repeats span residues Leu415–Tyr439, Phe440–Ser463, Ser467–Gln490, His491–Leu514, Pro515–His537, Lys544–Leu568, Arg569–Leu592, Lys593–Ser617, Arg619–Phe639, Ser640–Lys665, Gln667–Phe685, Pro686–Lys709, Leu753–Leu777, Lys778–Leu801, Thr802–Leu825, and Phe827–Arg850. Residue Asn457 is glycosylated (N-linked (GlcNAc...) asparagine). 5 N-linked (GlcNAc...) asparagine glycosylation sites follow: Asn521, Asn524, Asn556, Asn582, and Asn605. The N-linked (GlcNAc...) asparagine glycan is linked to Asn653. The N-linked (GlcNAc...) asparagine glycan is linked to Asn699. Asn784 and Asn800 each carry an N-linked (GlcNAc...) asparagine glycan. N-linked (GlcNAc...) asparagine glycosylation is found at Asn832, Asn852, and Asn882. The helical transmembrane segment at Ile898 to Leu918 threads the bilayer. The Cytoplasmic portion of the chain corresponds to Val919–His943.

Belongs to the RLP family.

The protein resides in the cell membrane. This is Receptor-like protein 35 from Arabidopsis thaliana (Mouse-ear cress).